Here is a 215-residue protein sequence, read N- to C-terminus: MKAISRVLIAMISALAAAVAGLFVSAGTSHAGLDNELSLVDGQDRTLTVQQWDTFLNGVFPLDRNRLTREWFHSGRAKYIVAGPGADEFEGTLELGYQIGFPWSLGVGINFSYTTPNILIDDGDITGPPFGLESVITPNLFPGVSISADLGNGPGIQEVATFSVDVSGPAGGVAVSNAHGTVTGAAGGVLLRPFARLIASTGDSVTTYGEPWNMN.

An N-terminal signal peptide occupies residues 1 to 31 (MKAISRVLIAMISALAAAVAGLFVSAGTSHA).

The protein belongs to the mycobacterial porin (TC 1.B.24) family. As to quaternary structure, octamers. Probably forms a goblet with the wide end on the exterior of the outer membrane and a central channel. It is not known if mixed oligomers of MspC with other Msp subunits form in vivo.

Its subcellular location is the cell outer membrane. The protein resides in the secreted. The protein localises to the cell wall. In terms of biological role, a constitutively expressed secondary porin, forms a water-filled channel which favors the permeation of cations and less efficiently phosphate. There are about 2400 porins in wild-type, 800 in an mspA deletion and 150 in a double mspA-mspC deletion. This is Porin MspC (mspC) from Mycolicibacterium smegmatis (strain ATCC 700084 / mc(2)155) (Mycobacterium smegmatis).